Reading from the N-terminus, the 529-residue chain is uncharacterized protein (529 aa).

Residues 354-373 (FHVASFPWISWAILGSYIML) traverse the membrane as a helical segment.

The protein resides in the host membrane. This is an uncharacterized protein from Acidianus convivator (ATV).